A 216-amino-acid polypeptide reads, in one-letter code: Flavin-dependent thymidylate synthase (216 aa).

A ThyX domain is found at 9-206 (GFVELVDVMG…PWTYEAFIKY (198 aa)). Residues S55, 78–80 (RHR), and E86 each bind FAD. Residues 75 to 78 (QWFR), 86 to 90 (ELSGR), and R145 each bind dUMP. A ThyX motif motif is present at residues 78-88 (RHRIASYNELS). FAD is bound by residues 161–163 (NAR) and N167. R172 is a binding site for dUMP. Catalysis depends on R172, which acts as the Involved in ionization of N3 of dUMP, leading to its activation.

Belongs to the thymidylate synthase ThyX family. In terms of assembly, homotetramer. Requires FAD as cofactor.

The enzyme catalyses dUMP + (6R)-5,10-methylene-5,6,7,8-tetrahydrofolate + NADPH + H(+) = dTMP + (6S)-5,6,7,8-tetrahydrofolate + NADP(+). It participates in pyrimidine metabolism; dTTP biosynthesis. Functionally, catalyzes the reductive methylation of 2'-deoxyuridine-5'-monophosphate (dUMP) to 2'-deoxythymidine-5'-monophosphate (dTMP) while utilizing 5,10-methylenetetrahydrofolate (mTHF) as the methyl donor, and NADPH and FADH(2) as the reductant. This chain is Flavin-dependent thymidylate synthase, found in Thermotoga neapolitana (strain ATCC 49049 / DSM 4359 / NBRC 107923 / NS-E).